We begin with the raw amino-acid sequence, 371 residues long: 4-hydroxy-3-methylbut-2-en-1-yl diphosphate synthase (flavodoxin) (371 aa).

Cysteine 270, cysteine 273, cysteine 305, and glutamate 312 together coordinate [4Fe-4S] cluster.

The protein belongs to the IspG family. [4Fe-4S] cluster serves as cofactor.

It catalyses the reaction (2E)-4-hydroxy-3-methylbut-2-enyl diphosphate + oxidized [flavodoxin] + H2O + 2 H(+) = 2-C-methyl-D-erythritol 2,4-cyclic diphosphate + reduced [flavodoxin]. It functions in the pathway isoprenoid biosynthesis; isopentenyl diphosphate biosynthesis via DXP pathway; isopentenyl diphosphate from 1-deoxy-D-xylulose 5-phosphate: step 5/6. Converts 2C-methyl-D-erythritol 2,4-cyclodiphosphate (ME-2,4cPP) into 1-hydroxy-2-methyl-2-(E)-butenyl 4-diphosphate. In Shewanella sp. (strain ANA-3), this protein is 4-hydroxy-3-methylbut-2-en-1-yl diphosphate synthase (flavodoxin).